The primary structure comprises 256 residues: Imidazole glycerol phosphate synthase subunit HisF (256 aa).

Residues aspartate 12 and aspartate 131 contribute to the active site.

It belongs to the HisA/HisF family. As to quaternary structure, heterodimer of HisH and HisF.

It localises to the cytoplasm. The enzyme catalyses 5-[(5-phospho-1-deoxy-D-ribulos-1-ylimino)methylamino]-1-(5-phospho-beta-D-ribosyl)imidazole-4-carboxamide + L-glutamine = D-erythro-1-(imidazol-4-yl)glycerol 3-phosphate + 5-amino-1-(5-phospho-beta-D-ribosyl)imidazole-4-carboxamide + L-glutamate + H(+). It participates in amino-acid biosynthesis; L-histidine biosynthesis; L-histidine from 5-phospho-alpha-D-ribose 1-diphosphate: step 5/9. Functionally, IGPS catalyzes the conversion of PRFAR and glutamine to IGP, AICAR and glutamate. The HisF subunit catalyzes the cyclization activity that produces IGP and AICAR from PRFAR using the ammonia provided by the HisH subunit. The polypeptide is Imidazole glycerol phosphate synthase subunit HisF (Pseudomonas fluorescens (strain Pf0-1)).